We begin with the raw amino-acid sequence, 369 residues long: Prenyltransferase malB (369 aa).

Glutamate 87 provides a ligand contact to substrate. Positions 100 and 189 each coordinate dimethylallyl diphosphate. Substrate is bound at residue tyrosine 191.

Belongs to the tryptophan dimethylallyltransferase family.

In terms of biological role, prenyltransferase; part of the gene cluster that mediates the biosynthesis of malbrancheamide, a dichlorinated fungal indole alkaloid that belongs to a family of natural products containing a characteristic bicyclo[2.2.2]diazaoctane core. The first step of malbrancheamide biosynthesis involves coupling of L-proline and L-tryptophan by malG, a bimodular NRPS, to produce L-Pro-L-Trp aldehyde through reductive offloading. This compound undergoes spontaneous cyclization and dehydration to give a dienamine which is reverse prenylated at C-2 by malE. The other prenyltransferase present in the cluster, malB, displays modest activity, suggesting that may be a redundant gene in the pathway. Subsequently, a [4+2] Diels-Alder cyclo-addition catalyzed by the bifunctional enzyme malC forms the characteristic bicyclo[2.2.2]diazaoctane ring of premalbrancheamid. Finally, the flavin-dependent halogenase malA catalyzes the iterative dichlorination of the indole ring of premalbrancheamide to yield C-9 monochlorinated malbrancheamide B, C-8 monochlorinated isomalbrancheamide B, and dichlorinated malbrancheamide. MalA is also able to brominate premalbrancheamide at C-9 to yield malbrancheamide C, and, to a lesser extend, at C-8 to yield isomalbrancheamide C. Finally, malA can brominate C-9 monochlorinated malbrancheamide B at C-8 to yield malbrancheamide D, or C-8 monochlorinated isomalbrancheamide B at C-9 to produce isomalbrancheamide D. This is Prenyltransferase malB from Malbranchea aurantiaca.